Consider the following 406-residue polypeptide: 4-hydroxy-3-methylbut-2-en-1-yl diphosphate synthase (flavodoxin) (406 aa).

The [4Fe-4S] cluster site is built by Cys297, Cys300, Cys343, and Glu350.

The protein belongs to the IspG family. In terms of assembly, homodimer. [4Fe-4S] cluster is required as a cofactor.

The enzyme catalyses (2E)-4-hydroxy-3-methylbut-2-enyl diphosphate + oxidized [flavodoxin] + H2O + 2 H(+) = 2-C-methyl-D-erythritol 2,4-cyclic diphosphate + reduced [flavodoxin]. Its pathway is isoprenoid biosynthesis; isopentenyl diphosphate biosynthesis via DXP pathway; isopentenyl diphosphate from 1-deoxy-D-xylulose 5-phosphate: step 5/6. Converts 2C-methyl-D-erythritol 2,4-cyclodiphosphate (ME-2,4cPP) into 1-hydroxy-2-methyl-2-(E)-butenyl 4-diphosphate. The protein is 4-hydroxy-3-methylbut-2-en-1-yl diphosphate synthase (flavodoxin) of Thermus thermophilus (strain ATCC BAA-163 / DSM 7039 / HB27).